The chain runs to 280 residues: Pantothenate synthetase (280 aa).

Residue 30-37 coordinates ATP; it reads MGYLHEGH. Residue histidine 37 is the Proton donor of the active site. Residue glutamine 61 coordinates (R)-pantoate. Glutamine 61 contacts beta-alanine. Residue 147–150 coordinates ATP; the sequence is GQKD. Glutamine 153 lines the (R)-pantoate pocket. Residues valine 176 and 184 to 187 each bind ATP; that span reads MSSR.

Belongs to the pantothenate synthetase family. In terms of assembly, homodimer.

It is found in the cytoplasm. It catalyses the reaction (R)-pantoate + beta-alanine + ATP = (R)-pantothenate + AMP + diphosphate + H(+). Its pathway is cofactor biosynthesis; (R)-pantothenate biosynthesis; (R)-pantothenate from (R)-pantoate and beta-alanine: step 1/1. Its function is as follows. Catalyzes the condensation of pantoate with beta-alanine in an ATP-dependent reaction via a pantoyl-adenylate intermediate. This is Pantothenate synthetase from Fervidobacterium nodosum (strain ATCC 35602 / DSM 5306 / Rt17-B1).